Reading from the N-terminus, the 277-residue chain is MKKPVDFFAMKENGEKITMITAYDYPSAKNVEQAEADMILVGDSLGMVVLGYDSTVPVTMDDMIHHTKAVKRGAPDTFVVTDMPFMTYHGSVDETIQNARKIIQESGAHAVKLEGAGEVVNKIARLTEAGAPVVAHLGLTPQSVGLTGSYKVRAKSAQEAQELMDNALAVEAAGAIAIVLEAIPRQLAEKVSKALSIPTIGIGAGVETDGQVLVYHDIIGYGISRRAKFVKAYAEIDETIEPALASYVKEVKAATFPEVKHSFTMAEEDLKGLYGRE.

The Mg(2+) site is built by aspartate 43 and aspartate 82. Residues 43–44 (DS), aspartate 82, and lysine 112 each bind 3-methyl-2-oxobutanoate. Glutamate 114 is a Mg(2+) binding site. Glutamate 181 serves as the catalytic Proton acceptor.

It belongs to the PanB family. As to quaternary structure, homodecamer; pentamer of dimers. Mg(2+) is required as a cofactor.

Its subcellular location is the cytoplasm. The enzyme catalyses 3-methyl-2-oxobutanoate + (6R)-5,10-methylene-5,6,7,8-tetrahydrofolate + H2O = 2-dehydropantoate + (6S)-5,6,7,8-tetrahydrofolate. Its pathway is cofactor biosynthesis; (R)-pantothenate biosynthesis; (R)-pantoate from 3-methyl-2-oxobutanoate: step 1/2. Catalyzes the reversible reaction in which hydroxymethyl group from 5,10-methylenetetrahydrofolate is transferred onto alpha-ketoisovalerate to form ketopantoate. The chain is 3-methyl-2-oxobutanoate hydroxymethyltransferase from Listeria monocytogenes serotype 4a (strain HCC23).